The chain runs to 123 residues: D-ribose pyranase (123 aa).

The active-site Proton donor is His-20. Substrate is bound by residues Asp-28, His-90, and 112–114 (YAN).

It belongs to the RbsD / FucU family. RbsD subfamily. Homodecamer.

It localises to the cytoplasm. It carries out the reaction beta-D-ribopyranose = beta-D-ribofuranose. It participates in carbohydrate metabolism; D-ribose degradation; D-ribose 5-phosphate from beta-D-ribopyranose: step 1/2. In terms of biological role, catalyzes the interconversion of beta-pyran and beta-furan forms of D-ribose. In Corynebacterium glutamicum (strain R), this protein is D-ribose pyranase.